We begin with the raw amino-acid sequence, 159 residues long: 2-C-methyl-D-erythritol 2,4-cyclodiphosphate synthase (159 aa).

Positions 8 and 10 each coordinate a divalent metal cation. Residues 8–10 (DVH) and 34–35 (HS) contribute to the 4-CDP-2-C-methyl-D-erythritol 2-phosphate site. His-42 provides a ligand contact to a divalent metal cation. Residues 56–58 (DIG), 100–106 (AQAPKMA), 132–135 (TTTE), Phe-139, and Arg-142 contribute to the 4-CDP-2-C-methyl-D-erythritol 2-phosphate site.

This sequence belongs to the IspF family. In terms of assembly, homotrimer. A divalent metal cation serves as cofactor.

The catalysed reaction is 4-CDP-2-C-methyl-D-erythritol 2-phosphate = 2-C-methyl-D-erythritol 2,4-cyclic diphosphate + CMP. It participates in isoprenoid biosynthesis; isopentenyl diphosphate biosynthesis via DXP pathway; isopentenyl diphosphate from 1-deoxy-D-xylulose 5-phosphate: step 4/6. In terms of biological role, involved in the biosynthesis of isopentenyl diphosphate (IPP) and dimethylallyl diphosphate (DMAPP), two major building blocks of isoprenoid compounds. Catalyzes the conversion of 4-diphosphocytidyl-2-C-methyl-D-erythritol 2-phosphate (CDP-ME2P) to 2-C-methyl-D-erythritol 2,4-cyclodiphosphate (ME-CPP) with a corresponding release of cytidine 5-monophosphate (CMP). This chain is 2-C-methyl-D-erythritol 2,4-cyclodiphosphate synthase, found in Marinobacter nauticus (strain ATCC 700491 / DSM 11845 / VT8) (Marinobacter aquaeolei).